The chain runs to 213 residues: Uridine kinase (213 aa).

ATP is bound at residue 15–22 (GASASGKS).

The protein belongs to the uridine kinase family.

Its subcellular location is the cytoplasm. The enzyme catalyses uridine + ATP = UMP + ADP + H(+). It carries out the reaction cytidine + ATP = CMP + ADP + H(+). Its pathway is pyrimidine metabolism; CTP biosynthesis via salvage pathway; CTP from cytidine: step 1/3. The protein operates within pyrimidine metabolism; UMP biosynthesis via salvage pathway; UMP from uridine: step 1/1. This Pectobacterium carotovorum subsp. carotovorum (strain PC1) protein is Uridine kinase.